A 418-amino-acid polypeptide reads, in one-letter code: Light-independent protochlorophyllide reductase subunit N (418 aa).

C17, C42, and C103 together coordinate [4Fe-4S] cluster.

It belongs to the BchN/ChlN family. As to quaternary structure, protochlorophyllide reductase is composed of three subunits; ChlL, ChlN and ChlB. Forms a heterotetramer of two ChlB and two ChlN subunits. [4Fe-4S] cluster serves as cofactor.

The catalysed reaction is chlorophyllide a + oxidized 2[4Fe-4S]-[ferredoxin] + 2 ADP + 2 phosphate = protochlorophyllide a + reduced 2[4Fe-4S]-[ferredoxin] + 2 ATP + 2 H2O. It functions in the pathway porphyrin-containing compound metabolism; chlorophyll biosynthesis (light-independent). Functionally, component of the dark-operative protochlorophyllide reductase (DPOR) that uses Mg-ATP and reduced ferredoxin to reduce ring D of protochlorophyllide (Pchlide) to form chlorophyllide a (Chlide). This reaction is light-independent. The NB-protein (ChlN-ChlB) is the catalytic component of the complex. This chain is Light-independent protochlorophyllide reductase subunit N, found in Prochlorococcus marinus (strain MIT 9215).